Reading from the N-terminus, the 1030-residue chain is Putative pentatricopeptide repeat-containing protein At5g06400, mitochondrial (1030 aa).

Residues 1-77 (MKALFRFKSC…VKLDETTRLR (77 aa)) constitute a mitochondrion transit peptide. PPR repeat units follow at residues 188 to 222 (RVGI…GCDK), 223 to 257 (DIRT…GFEL), 258 to 292 (DATA…GITF), 293 to 323 (GLRT…MVRI), 328 to 362 (EHDA…EMCL), 363 to 393 (DAKY…MKRR), 397 to 431 (DSNV…GRPP), 432 to 466 (RVST…GIEP), 467 to 501 (DSVA…GIKP), 502 to 536 (TWKS…KIVI), 677 to 711 (NSEA…GCLI), 712 to 746 (TQDT…GLIP), 747 to 783 (SSST…GFVP), 784 to 814 (DREL…LGKI), 818 to 852 (VTVA…RSLL), 853 to 887 (DQYT…GTKP), 888 to 922 (GVHV…SCEP), 923 to 957 (SVVT…GTSP), and 958 to 992 (DFKT…GIAP).

This sequence belongs to the PPR family. P subfamily.

The protein localises to the mitochondrion. The sequence is that of Putative pentatricopeptide repeat-containing protein At5g06400, mitochondrial from Arabidopsis thaliana (Mouse-ear cress).